A 497-amino-acid polypeptide reads, in one-letter code: tRNA (adenine(58)-N(1))-methyltransferase non-catalytic subunit TRM6 (497 aa).

2 disordered regions span residues 1–20 (MEGS…DHRI) and 69–100 (TSGG…IVDD). The span at 79–100 (KREEPTAETKEAGTDNRNIVDD) shows a compositional bias: basic and acidic residues. 94–104 (NRNIVDDGKSQ) serves as a coordination point for substrate. T107 carries the phosphothreonine modification. Substrate-binding positions include 145-154 (KYIKKKKKKY) and 175-182 (REPGKINH). Residues 276–354 (SSEPKDSALV…EKQRRQEEQR (79 aa)) are disordered. A phosphoserine mark is found at S298 and S305. Basic and acidic residues predominate over residues 327-354 (DPEHKGPKERGSKKDYIQEKQRRQEEQR). Substrate is bound by residues R349, R377, 415 to 423 (RERGGVINL), and 434 to 441 (QVLPDRSH). Residues 472-497 (SNASTLESHETEEPAAKKRKCPESDS) form a disordered region. Over residues 478 to 497 (ESHETEEPAAKKRKCPESDS) the composition is skewed to basic and acidic residues.

The protein belongs to the TRM6/GCD10 family. As to quaternary structure, heterotetramer; composed of two copies of TRMT6 and two copies of TRMT61A. Expressed in brain, liver, testis and ovary.

It is found in the nucleus. Its function is as follows. Substrate-binding subunit of tRNA (adenine-N(1)-)-methyltransferase, which catalyzes the formation of N(1)-methyladenine at position 58 (m1A58) in initiator methionyl-tRNA. Together with the TRMT61A catalytic subunit, part of a mRNA N(1)-methyltransferase complex that mediates methylation of adenosine residues at the N(1) position of a small subset of mRNAs: N(1) methylation takes place in tRNA T-loop-like structures of mRNAs and is only present at low stoichiometries. In Homo sapiens (Human), this protein is tRNA (adenine(58)-N(1))-methyltransferase non-catalytic subunit TRM6 (TRMT6).